Here is a 968-residue protein sequence, read N- to C-terminus: MPFTLGQRWISDTESELGLGTVVAMDARTVTLLFPSTGENRLYARSDSPVTRVMFNPGDTITSHEGWQLHIDEVKEENGLLVYVGTRLDTEETNVTLREVLLDSKLVFSKPQDRLFAGQIDRMDRFALRYRARKFQSEQYRMPYSGLRGQRTNLIPHQLNIAHDVGRRHAPRVLLADEVGLGKTIEAGMILHQQLLSGAAERVLIIVPETLQHQWLVEMLRRFNLRFALFDDERYTEAQHDAYNPFETEQLVICSLDFARRNKQRLEHLCDAEWDLLVVDEAHHLVWSTDAPSREYMAIEQLAERVPGVLLLTATPEQLGMESHFARLRLLDPNRFHDFEQFVEEQKNYRPVADAVAMLLAGNKLSNDELNRLGDLIGEQDIEPLLQAANSDRDDAQAARDELVSMLMDRHGTSRVLFRNTRNGVKGFPKRELHTVKLPLPTQYQTAIKVSGIMGARKSAEDRARDMLYPEQIYQEFEGDTGTWWNFDPRVEWLMGYLTSHRSQKVLVICAKATTALQLEQVLREREGIRAAVFHEGMSIIERDRAAAWFAEEDTGAQVLLCSEIGSEGRNFQFASNLVMFDLPFNPDLLEQRIGRLDRIGQAHDIQIHVPYLEKTAQSVLVRWYHEGLDAFEHTCPTGRAIYDSAYASLINYLAAPEETDGFDDLIKSCREQHEALKAQLEQGRDRLLEINSNGGEKAQQLAQSIEEQDDDTNLIAFAMNLFDIVGINQDDRGDNLIVLTPSDHMLVPDFPGLPEDGCTITFERDVALSREDAQFITWEHPLIRNGLDLILSGDTGSSTISLLKNKALPVGTLLVELVYVVEAQAPKQLQLNRFLPPTPVRMLLDKNGNNLAAQVEFETFNRQLSAVNRHTGSKLVNAVQQDVHAILQLGETQIEQSARALIDNARREADEKLSGELSRLEALRAVNPNIRDDELAAIDSNRQQVLESLNQAGWRLDALRLIVVTHQ.

A Helicase ATP-binding domain is found at 164–334; it reads DVGRRHAPRV…FARLRLLDPN (171 aa). An ATP-binding site is contributed by 177–184; sequence DEVGLGKT. The short motif at 280-283 is the DEAH box element; the sequence is DEAH. Residues 490 to 685 enclose the Helicase C-terminal domain; sequence RVEWLMGYLT…ALKAQLEQGR (196 aa).

The protein belongs to the SNF2/RAD54 helicase family. RapA subfamily. As to quaternary structure, interacts with the RNAP. Has a higher affinity for the core RNAP than for the holoenzyme. Its ATPase activity is stimulated by binding to RNAP.

Its function is as follows. Transcription regulator that activates transcription by stimulating RNA polymerase (RNAP) recycling in case of stress conditions such as supercoiled DNA or high salt concentrations. Probably acts by releasing the RNAP, when it is trapped or immobilized on tightly supercoiled DNA. Does not activate transcription on linear DNA. Probably not involved in DNA repair. The polypeptide is RNA polymerase-associated protein RapA (Salmonella typhi).